The chain runs to 61 residues: Photosystem II reaction center protein K (61 aa).

Residues 1–24 constitute a propeptide that is removed on maturation; sequence MLNIFCLICICLNSTLYSSSFFFA. The chain crosses the membrane as a helical span at residues 32–52; that stretch reads FFNPIIDVMPIIPVLFFLLAF.

The protein belongs to the PsbK family. PSII is composed of 1 copy each of membrane proteins PsbA, PsbB, PsbC, PsbD, PsbE, PsbF, PsbH, PsbI, PsbJ, PsbK, PsbL, PsbM, PsbT, PsbX, PsbY, PsbZ, Psb30/Ycf12, at least 3 peripheral proteins of the oxygen-evolving complex and a large number of cofactors. It forms dimeric complexes.

The protein resides in the plastid. It is found in the chloroplast thylakoid membrane. One of the components of the core complex of photosystem II (PSII). PSII is a light-driven water:plastoquinone oxidoreductase that uses light energy to abstract electrons from H(2)O, generating O(2) and a proton gradient subsequently used for ATP formation. It consists of a core antenna complex that captures photons, and an electron transfer chain that converts photonic excitation into a charge separation. In Phalaenopsis aphrodite subsp. formosana (Moth orchid), this protein is Photosystem II reaction center protein K.